Reading from the N-terminus, the 467-residue chain is MLDFLDYIQFAFSDASKWNRDNSYSQLTMTANALLDFSTPERLKVNLSSLSTPHFATTYTLGTVGLIDGSISYLFTTVPLRDTPSRGTLIPLRKLVPGYRQISAPSLPPGLPTVDGRDGDLAIGDTQGILKKKPTLLHATLHLPPPTTLTGLFLRRLSPTTQLSLAFCSSRASTPKSAPQAALVTQILHDTGKYSSEFLFSTDNALFGFKGLWNFGPDPRKQNQQGDPARESCRPLLSLLSAGAEAYYSPVSSVVGLSTGLRFTTLPAATESPHFTFPYTLTLTLTPLTGSMSTTYSLLASPNVSFSSRFGFNVYSWESEMVAGCELWRRSSNNRLHDDKSQRDSPLFAVDDLTWARRKMGLPDTAPSRNRECDDLPPPRRDNYHHQRSPHASDSVIKVRVDQSWNIRALWEGRVKELLVSAGVALGPTPRSSLSYASSSAAGGVGAAGGLSSYGWKSVGVSVLYSS.

The interval 361–393 (GLPDTAPSRNRECDDLPPPRRDNYHHQRSPHAS) is disordered. The span at 369 to 385 (RNRECDDLPPPRRDNYH) shows a compositional bias: basic and acidic residues.

The protein belongs to the MDM10 family. Component of the ER-mitochondria encounter structure (ERMES) or MDM complex, composed of MMM1, MDM10, MDM12 and MDM34. Associates with the mitochondrial outer membrane sorting assembly machinery SAM(core) complex.

It is found in the mitochondrion outer membrane. Its function is as follows. Component of the ERMES/MDM complex, which serves as a molecular tether to connect the endoplasmic reticulum and mitochondria. Components of this complex are involved in the control of mitochondrial shape and protein biogenesis and may function in phospholipid exchange. MDM10 is involved in the late assembly steps of the general translocase of the mitochondrial outer membrane (TOM complex). Functions in the TOM40-specific route of the assembly of outer membrane beta-barrel proteins, including the association of TOM40 with the receptor TOM22 and small TOM proteins. Can associate with the SAM(core) complex as well as the MDM12-MMM1 complex, both involved in late steps of the major beta-barrel assembly pathway, that is responsible for biogenesis of all outer membrane beta-barrel proteins. May act as a switch that shuttles between both complexes and channels precursor proteins into the TOM40-specific pathway. Plays a role in mitochondrial morphology and in the inheritance of mitochondria. The sequence is that of Mitochondrial distribution and morphology protein 10 from Ajellomyces capsulatus (strain NAm1 / WU24) (Darling's disease fungus).